A 253-amino-acid polypeptide reads, in one-letter code: Ribosome-inactivating protein saporin-9 (253 aa).

Glu176 is a catalytic residue.

It carries out the reaction Endohydrolysis of the N-glycosidic bond at one specific adenosine on the 28S rRNA.. Ribosome-inactivating protein of type 1, inhibits protein synthesis in animal cells. The chain is Ribosome-inactivating protein saporin-9 (SAP9) from Saponaria officinalis (Common soapwort).